The following is an 810-amino-acid chain: Exocyst complex component 6B (810 aa).

Residues threonine 79 to glutamine 118 adopt a coiled-coil conformation. Positions glutamate 258–valine 282 are disordered. Residues aspartate 272 to valine 282 are compositionally biased toward acidic residues.

The protein belongs to the SEC15 family. As to quaternary structure, the exocyst complex is composed of SEC3, SEC5, SEC6, SEC8, SEC10, SEC15, EXO70 and EXO84.

Component of the exocyst complex involved in the docking of exocytic vesicles with fusion sites on the plasma membrane. The polypeptide is Exocyst complex component 6B (Exoc6b) (Mus musculus (Mouse)).